Consider the following 426-residue polypeptide: Endothelin-1 receptor (426 aa).

An N-terminal signal peptide occupies residues 1 to 20; that stretch reads METFCLKVTFWVALVGYVIG. Topologically, residues 21 to 79 are extracellular; the sequence is DHPESYSTNLSTPVDFTTFHGTELSFLVTTHRPTNLALPSNGSMHSYCPQQTKITSAFK. Asparagine 29 and asparagine 61 each carry an N-linked (GlcNAc...) asparagine glycan. A helical membrane pass occupies residues 80 to 101; it reads YINTVISCTIFIVGMVGNATLL. At 102–111 the chain is on the cytoplasmic side; the sequence is RIIYQNKCMR. The chain crosses the membrane as a helical span at residues 112-131; it reads NGPNALIASLALGDLIYVVI. At 132 to 158 the chain is on the extracellular side; that stretch reads DLPINVFKLLAGRWPFDHNDFGVFLCK. A disulfide bond links cysteine 157 and cysteine 238. Residues 159-180 traverse the membrane as a helical segment; it reads LFPFLQKSSVGITVLNLCALSV. At 181-204 the chain is on the cytoplasmic side; sequence DRYRAVASWSRVQGIGIPLITAIE. Residues 205–228 traverse the membrane as a helical segment; that stretch reads IVSIWILSFILAIPEAIGFVMVPF. Residues 229-255 lie on the Extracellular side of the membrane; sequence EYKGEQHKTCMLNATSKFMEFYQDVKD. Asparagine 241 carries an N-linked (GlcNAc...) asparagine glycan. The chain crosses the membrane as a helical span at residues 256–277; it reads WWLFGFYFCMPLVCTAIFYTLM. Over 278–305 the chain is Cytoplasmic; the sequence is TCEMLNRRNGSLRIALSEHLKQRREVAK. A helical transmembrane segment spans residues 306–327; it reads TVFCLVVIFALCWFPLHLSRIL. The Extracellular segment spans residues 328–346; sequence KKTVYDEMDKNRCELLSFL. Residues 347 to 371 traverse the membrane as a helical segment; it reads RLMDYIGINLATMNSCINPIALYFV. The Cytoplasmic segment spans residues 372-426; the sequence is SKKFKNCFQSCLCCCCYQSKSLMTSVPMNGTSIQWKNHEQNNHNTERSSHKDSIN. A Phosphoserine modification is found at serine 424.

It belongs to the G-protein coupled receptor 1 family. Endothelin receptor subfamily. EDNRA sub-subfamily. In terms of assembly, interacts with HDAC7 and KAT5.

The protein resides in the cell membrane. Functionally, receptor for endothelin-1. Mediates its action by association with G proteins that activate a phosphatidylinositol-calcium second messenger system. The rank order of binding affinities for ET-A is: ET1 &gt; ET2 &gt;&gt; ET3. The polypeptide is Endothelin-1 receptor (Canis lupus familiaris (Dog)).